The following is a 481-amino-acid chain: Glycogen synthase (481 aa).

Residue K15 coordinates ADP-alpha-D-glucose.

This sequence belongs to the glycosyltransferase 1 family. Bacterial/plant glycogen synthase subfamily.

The catalysed reaction is [(1-&gt;4)-alpha-D-glucosyl](n) + ADP-alpha-D-glucose = [(1-&gt;4)-alpha-D-glucosyl](n+1) + ADP + H(+). It participates in glycan biosynthesis; glycogen biosynthesis. Synthesizes alpha-1,4-glucan chains using ADP-glucose. The sequence is that of Glycogen synthase from Mesorhizobium japonicum (strain LMG 29417 / CECT 9101 / MAFF 303099) (Mesorhizobium loti (strain MAFF 303099)).